The chain runs to 100 residues: Large ribosomal subunit protein uL23 (100 aa).

It belongs to the universal ribosomal protein uL23 family. Part of the 50S ribosomal subunit. Contacts protein L29, and trigger factor when it is bound to the ribosome.

Its function is as follows. One of the early assembly proteins it binds 23S rRNA. One of the proteins that surrounds the polypeptide exit tunnel on the outside of the ribosome. Forms the main docking site for trigger factor binding to the ribosome. In Mycobacterium tuberculosis (strain ATCC 25177 / H37Ra), this protein is Large ribosomal subunit protein uL23.